The chain runs to 118 residues: Small ribosomal subunit protein uS19c (118 aa).

A disordered region spans residues 92–118; it reads KKSSKKVTKNKKSIKKNIKTTSKKFKK.

Belongs to the universal ribosomal protein uS19 family.

It localises to the plastid. Functionally, protein S19 forms a complex with S13 that binds strongly to the 16S ribosomal RNA. This Euglena longa (Euglenophycean alga) protein is Small ribosomal subunit protein uS19c (rps19).